Reading from the N-terminus, the 442-residue chain is ATP-dependent protease ATPase subunit HslU (442 aa).

ATP is bound by residues isoleucine 18 and 60–65 (GVGKTE). Residues 136-156 (LPKPKNDWDSTDSDANSNTRQ) are disordered. Residues aspartate 255, glutamate 320, and arginine 392 each contribute to the ATP site.

It belongs to the ClpX chaperone family. HslU subfamily. A double ring-shaped homohexamer of HslV is capped on each side by a ring-shaped HslU homohexamer. The assembly of the HslU/HslV complex is dependent on binding of ATP.

It localises to the cytoplasm. Its function is as follows. ATPase subunit of a proteasome-like degradation complex; this subunit has chaperone activity. The binding of ATP and its subsequent hydrolysis by HslU are essential for unfolding of protein substrates subsequently hydrolyzed by HslV. HslU recognizes the N-terminal part of its protein substrates and unfolds these before they are guided to HslV for hydrolysis. The polypeptide is ATP-dependent protease ATPase subunit HslU (Shewanella sp. (strain MR-7)).